Reading from the N-terminus, the 613-residue chain is Zinc metalloproteinase-disintegrin-like MTP4 (613 aa).

The first 20 residues, 1–20, serve as a signal peptide directing secretion; it reads MIEVLLVTICFTVFPYQGSS. A propeptide spanning residues 21-191 is cleaved from the precursor; the sequence is IILESGNVND…DEPIEKISQL (171 aa). A Peptidase M12B domain is found at 205–401; that stretch reads KYIELYVVVD…VRPQCILNKP (197 aa). Residue Glu208 coordinates Ca(2+). N-linked (GlcNAc...) asparagine glycosylation is present at Asn282. Residue Asp292 coordinates Ca(2+). Disulfide bonds link Cys316-Cys396, Cys356-Cys380, and Cys358-Cys363. Zn(2+)-binding residues include His341, His345, and His351. 7 residues coordinate Ca(2+): Cys396, Asn399, Asn414, Phe416, Glu418, Glu421, and Asp424. The Disintegrin domain maps to 409–495; that stretch reads PPVCGNYFVE…KCPTDSFQRN (87 aa). 15 cysteine pairs are disulfide-bonded: Cys412-Cys441, Cys423-Cys436, Cys425-Cys431, Cys435-Cys458, Cys449-Cys455, Cys454-Cys480, Cys467-Cys487, Cys474-Cys506, Cys499-Cys511, Cys518-Cys568, Cys533-Cys575, Cys543-Cys577, Cys546-Cys556, Cys563-Cys601, and Cys595-Cys606. The N-linked (GlcNAc...) asparagine glycan is linked to Asn437. Residues 473–475 carry the D/ECD-tripeptide motif; sequence DCD. Ca(2+) contacts are provided by Asp475, Leu476, Glu478, and Asp490. The interval 561 to 574 is hypervariable region that may play important roles toward cell migration; that stretch reads KMCGKLLCEKGNAT. N-linked (GlcNAc...) asparagine glycosylation occurs at Asn572.

It belongs to the venom metalloproteinase (M12B) family. P-III subfamily. Monomer. The cofactor is Zn(2+). As to expression, expressed by the venom gland.

It is found in the secreted. Its function is as follows. Snake venom zinc metalloproteinase that may impair hemostasis in the prey. This Drysdalia coronoides (White-lipped snake) protein is Zinc metalloproteinase-disintegrin-like MTP4.